The following is a 352-amino-acid chain: Protein Wnt-3a (352 aa).

Residues 1–18 form the signal peptide; the sequence is MAPLGYLLVLCSLKQALG. 11 cysteine pairs are disulfide-bonded: Cys77-Cys88, Cys128-Cys136, Cys138-Cys155, Cys203-Cys217, Cys205-Cys212, Cys281-Cys312, Cys297-Cys307, Cys311-Cys351, Cys327-Cys342, Cys329-Cys339, and Cys334-Cys335. An N-linked (GlcNAc...) asparagine glycan is attached at Asn87. The O-palmitoleoyl serine; by PORCN moiety is linked to residue Ser209. Asn298 carries an N-linked (GlcNAc...) asparagine glycan.

The protein belongs to the Wnt family. In terms of assembly, forms a soluble 1:1 complex with AFM; this prevents oligomerization and is required for prolonged biological activity. The complex with AFM may represent the physiological form in body fluids. Homooligomer; disulfide-linked, leading to inactivation. Interacts with APCDD1 and WLS. Component of the Wnt-Fzd-LRP5-LRP6 signaling complex that contains a WNT protein, a FZD protein and LRP5 or LRP6. Interacts directly in the complex with LRP6. Interacts with PORCN. Interacts with glypican GPC3. Interacts with PKD1 (via extracellular domain). Interacts with FZD5. Post-translationally, proteolytic processing by TIKI1 and TIKI2 promotes oxidation and formation of large disulfide-bond oligomers, leading to inactivation of WNT3A. Disulfide bonds have critical and distinct roles in secretion and activity. Loss of each conserved cysteine in WNT3A results in high molecular weight oxidized Wnt oligomers, which are formed through inter-Wnt disulfide bonding. In terms of processing, palmitoleoylation by PORCN is required for efficient binding to frizzled receptors. Palmitoleoylation is required for proper trafficking to cell surface, vacuolar acidification is critical to release palmitoleoylated WNT3A from WLS in secretory vesicles. Depalmitoleoylated by NOTUM, leading to inhibit Wnt signaling pathway, possibly by promoting disulfide bond formation and oligomerization. As to expression, dorsal portion of the neural tube (developing roof plate), and mesenchyme tissue surrounding the umbilical veins.

The protein localises to the secreted. Its subcellular location is the extracellular space. It localises to the extracellular matrix. In terms of biological role, ligand for members of the frizzled family of seven transmembrane receptors. Functions in the canonical Wnt signaling pathway that results in activation of transcription factors of the TCF/LEF family. Required for normal embryonic mesoderm development and formation of caudal somites. Required for normal morphogenesis of the developing neural tube. Mediates self-renewal of the stem cells at the bottom on intestinal crypts (in vitro). The chain is Protein Wnt-3a (Wnt3a) from Mus musculus (Mouse).